A 196-amino-acid chain; its full sequence is Nucleotide kinase gp1.7 (196 aa).

The tract at residues 97–118 (PRKPHLNKPEVTPTDDQPSAET) is disordered.

In terms of assembly, dodecamer.

The catalysed reaction is dGMP + ATP = dGDP + ADP. The enzyme catalyses dTMP + ATP = dTDP + ADP. Nucleotide kinase that catalyzes the phosphorylation of dGMP and dTMP to dGDP and dTDP. A double mutation in this protein and the RecBCD inhibitor gp5.9 protein allow phage to overcome the retron Ec48 bacteriophage defense system. This protein alone when overexpressed in E.coli does not cause growth arrest; Y128C may be a silent mutation. This chain is Nucleotide kinase gp1.7, found in Escherichia coli (Bacteriophage T7).